Here is a 445-residue protein sequence, read N- to C-terminus: MQGLYIKSYGCQMNVYDSLIIENIIKPLGFSIVNELSEADIVILNTCHIREKAAEKLYSELGRIRKIQETKNLTIVVAGCVAQAEGTEIFTRAPFVDIVVGPQSIHTLPELIVKARKIKKQIINIDFPVISKFDAIAVEEYTKNQKVSAFISVQEGCNKFCSFCVVPYTRGEEYSRTVEAIFKEALILADSGIKEITLIGQNVNAYHGTYKGNEWDLGRLIQHIAKISSIERIYYTTSHPRDMHESLYEAHGIEKKLIPFIHLPVQSGSNKILRKMNRKHTAEEYINIIKTLRKHRSDIAYSSDFIVGFPGETDEDFENTIRLIEEVKFSQAYSFKYSPRPGTPSAEYTSQIPDEIKSQRLTKLQELVHKQQLEFNKKMIGETHPVLFYKKGKFDNQIIGKTPYMQSCYINTENPDLYYNKIVPIKITDAHKNHLTGIIPHTLPV.

The region spanning 2-117 is the MTTase N-terminal domain; the sequence is QGLYIKSYGC…LPELIVKARK (116 aa). Positions 11, 47, 80, 157, 161, and 164 each coordinate [4Fe-4S] cluster. Residues 143 to 374 form the Radical SAM core domain; the sequence is KNQKVSAFIS…QELVHKQQLE (232 aa). The region spanning 377 to 441 is the TRAM domain; the sequence is KKMIGETHPV…KNHLTGIIPH (65 aa).

The protein belongs to the methylthiotransferase family. MiaB subfamily. Monomer. [4Fe-4S] cluster serves as cofactor.

It is found in the cytoplasm. It carries out the reaction N(6)-dimethylallyladenosine(37) in tRNA + (sulfur carrier)-SH + AH2 + 2 S-adenosyl-L-methionine = 2-methylsulfanyl-N(6)-dimethylallyladenosine(37) in tRNA + (sulfur carrier)-H + 5'-deoxyadenosine + L-methionine + A + S-adenosyl-L-homocysteine + 2 H(+). Functionally, catalyzes the methylthiolation of N6-(dimethylallyl)adenosine (i(6)A), leading to the formation of 2-methylthio-N6-(dimethylallyl)adenosine (ms(2)i(6)A) at position 37 in tRNAs that read codons beginning with uridine. The sequence is that of tRNA-2-methylthio-N(6)-dimethylallyladenosine synthase from Ehrlichia ruminantium (strain Gardel).